A 156-amino-acid chain; its full sequence is Tripartite terminase subunit 2 (156 aa).

Positions Met1 to Ser37 are disordered. A compositionally biased stretch (polar residues) spans Ser19–Ser37.

It belongs to the herpesviridae TRM2 protein family. Associates with TRM1 and TRM3 to form the tripartite terminase complex.

The protein localises to the host nucleus. Its function is as follows. Component of the molecular motor that translocates viral genomic DNA in empty capsid during DNA packaging. Forms a tripartite terminase complex together with TRM1 and TRM3 in the host cytoplasm. Once the complex reaches the host nucleus, it interacts with the capsid portal vertex. This portal forms a ring in which genomic DNA is translocated into the capsid. This is Tripartite terminase subunit 2 from Varicella-zoster virus (strain Dumas) (HHV-3).